A 398-amino-acid chain; its full sequence is Acetate kinase (398 aa).

Asn8 contributes to the Mg(2+) binding site. Lys15 lines the ATP pocket. Substrate is bound at residue Arg89. Asp146 (proton donor/acceptor) is an active-site residue. ATP-binding positions include 206–210 (HIGNG), 283–285 (DMR), and 331–335 (GMGEN). Glu383 contacts Mg(2+).

Belongs to the acetokinase family. In terms of assembly, homodimer. It depends on Mg(2+) as a cofactor. Requires Mn(2+) as cofactor.

It localises to the cytoplasm. It catalyses the reaction acetate + ATP = acetyl phosphate + ADP. The protein operates within metabolic intermediate biosynthesis; acetyl-CoA biosynthesis; acetyl-CoA from acetate: step 1/2. Its function is as follows. Catalyzes the formation of acetyl phosphate from acetate and ATP. Can also catalyze the reverse reaction. This is Acetate kinase from Streptococcus pyogenes serotype M1.